A 1223-amino-acid chain; its full sequence is DNA-directed RNA polymerase II subunit RPB2 (1223 aa).

Positions 1–20 (MSADNEDYYDEDPYGFEEEN) are disordered. A Mg(2+)-binding site is contributed by aspartate 836. Residues cysteine 1162, cysteine 1165, cysteine 1181, and cysteine 1184 each contribute to the Zn(2+) site. The C4-type zinc-finger motif lies at 1162–1184 (CGICGLMSVIAKLNHNQFECKGC).

This sequence belongs to the RNA polymerase beta chain family. As to quaternary structure, component of the RNA polymerase II (Pol II) complex consisting of 12 subunits.

Its subcellular location is the nucleus. It carries out the reaction RNA(n) + a ribonucleoside 5'-triphosphate = RNA(n+1) + diphosphate. Functionally, DNA-dependent RNA polymerase catalyzes the transcription of DNA into RNA using the four ribonucleoside triphosphates as substrates. Second largest component of RNA polymerase II which synthesizes mRNA precursors and many functional non-coding RNAs. Proposed to contribute to the polymerase catalytic activity and forms the polymerase active center together with the largest subunit. Pol II is the central component of the basal RNA polymerase II transcription machinery. It is composed of mobile elements that move relative to each other. RPB2 is part of the core element with the central large cleft, the clamp element that moves to open and close the cleft and the jaws that are thought to grab the incoming DNA template. This Candida glabrata (strain ATCC 2001 / BCRC 20586 / JCM 3761 / NBRC 0622 / NRRL Y-65 / CBS 138) (Yeast) protein is DNA-directed RNA polymerase II subunit RPB2 (RPB2).